The following is a 500-amino-acid chain: Probable cytosol aminopeptidase (500 aa).

Lys262 and Asp267 together coordinate Mn(2+). Residue Lys274 is part of the active site. Asp285, Asp344, and Glu346 together coordinate Mn(2+). Arg348 is a catalytic residue.

This sequence belongs to the peptidase M17 family. Requires Mn(2+) as cofactor.

Its subcellular location is the cytoplasm. The enzyme catalyses Release of an N-terminal amino acid, Xaa-|-Yaa-, in which Xaa is preferably Leu, but may be other amino acids including Pro although not Arg or Lys, and Yaa may be Pro. Amino acid amides and methyl esters are also readily hydrolyzed, but rates on arylamides are exceedingly low.. The catalysed reaction is Release of an N-terminal amino acid, preferentially leucine, but not glutamic or aspartic acids.. Its function is as follows. Presumably involved in the processing and regular turnover of intracellular proteins. Catalyzes the removal of unsubstituted N-terminal amino acids from various peptides. The polypeptide is Probable cytosol aminopeptidase (Ehrlichia ruminantium (strain Welgevonden)).